The primary structure comprises 160 residues: Cytochrome b6-f complex subunit 4 (160 aa).

3 helical membrane-spanning segments follow: residues 36–56 (LLYV…GLAV), 95–115 (LLGV…PFIE), and 131–151 (LVFI…CLPI).

It belongs to the cytochrome b family. PetD subfamily. In terms of assembly, the 4 large subunits of the cytochrome b6-f complex are cytochrome b6, subunit IV (17 kDa polypeptide, petD), cytochrome f and the Rieske protein, while the 4 small subunits are petG, petL, petM and petN. The complex functions as a dimer.

The protein localises to the plastid. The protein resides in the chloroplast thylakoid membrane. Its function is as follows. Component of the cytochrome b6-f complex, which mediates electron transfer between photosystem II (PSII) and photosystem I (PSI), cyclic electron flow around PSI, and state transitions. This is Cytochrome b6-f complex subunit 4 from Trieres chinensis (Marine centric diatom).